A 332-amino-acid polypeptide reads, in one-letter code: tRNA dimethylallyltransferase (332 aa).

ATP is bound at residue 30 to 37 (GPTAVGKT). Substrate is bound at residue 32-37 (TAVGKT). Positions 57–60 (DSMQ) are interaction with substrate tRNA.

This sequence belongs to the IPP transferase family. As to quaternary structure, monomer. It depends on Mg(2+) as a cofactor.

It catalyses the reaction adenosine(37) in tRNA + dimethylallyl diphosphate = N(6)-dimethylallyladenosine(37) in tRNA + diphosphate. In terms of biological role, catalyzes the transfer of a dimethylallyl group onto the adenine at position 37 in tRNAs that read codons beginning with uridine, leading to the formation of N6-(dimethylallyl)adenosine (i(6)A). The polypeptide is tRNA dimethylallyltransferase (Natranaerobius thermophilus (strain ATCC BAA-1301 / DSM 18059 / JW/NM-WN-LF)).